Consider the following 876-residue polypeptide: MEMKPKYDPREVEAGRYEEWVKNGYFKPSEDKSKETYTIVIPPPNVTGKLHLGHAWDTTLQDIITRMKRMQGYDTLYLPGMDHAGIATQAKVEAKLNEKGITRYDLGREKFLEQAWDWKEEYASFIRAQWAKLGLGLDYSRERFTLDEGLSKAVKKVFVDLYNKGIIYRGERIINWDPKARTALSDIEVIHEDVQGAFYHFKYPYADGEGFIEIATTRPETMLGDTAIVVNPNDERYKDVIGKTVILPIVGRELPILADEYVDIDFGSGAMKVTPAHDLNDFEIGQRHQLENIIVMDENGKMNDKAGKYEGMDRFDCRKQLVEDLKEQDLVIKIEDHVHSVGHSERSGAVVEPYLSTQWFVRMEDLAKRSLDNQKTDDRIDFYPQRFEHTFNQWMENIRDWTISRQLWWGHQIPAWYHKETGEIYVGEEAPTDIENWQQDEDVLDTWFSSALWPFSTLGWPDLESEDFKRYYPTNALVTGYDIIFFWVARMIFQGLEFTDRRPFNDVLLHGLVRAEDGRKMSKSLGNGVDPMDVIDEYGADSLRYFLATGSSPGHDLRYSTEKVESVWNFINKIWNGARFSLMNIGEDFKVEDIDLSGNLSLADKWILTRLNETIATVTDLSDKYEFGEVGRALYNFIWDDFCDWYIEMSKIPMNGNDEEQKQITRSVLSYTLDNIMRMLHPFMPFVTEKIWQSLPHEGDTIVKASWPEVRESLIFEESKQTMQQLVEIIKSVRQSRVEVNTPLSKEIPILIQAKDKEIETTLSQNKDYLIKFCNPSTLNISTDVEIPEKAMTSVVIAGKVVLPLEGLIDMDKEISRLEKELAKLQSELDRVDKKLSNENFVSKAPEKVINEEKRKKQDYQEKYDGVKARIEQLKA.

The 'HIGH' region signature appears at 44–54 (PNVTGKLHLGH). The short motif at 520–524 (KMSKS) is the 'KMSKS' region element. Lysine 523 contacts ATP. The stretch at 805–876 (LEGLIDMDKE…VKARIEQLKA (72 aa)) forms a coiled coil.

This sequence belongs to the class-I aminoacyl-tRNA synthetase family. ValS type 1 subfamily. In terms of assembly, monomer.

It is found in the cytoplasm. The catalysed reaction is tRNA(Val) + L-valine + ATP = L-valyl-tRNA(Val) + AMP + diphosphate. Functionally, catalyzes the attachment of valine to tRNA(Val). As ValRS can inadvertently accommodate and process structurally similar amino acids such as threonine, to avoid such errors, it has a 'posttransfer' editing activity that hydrolyzes mischarged Thr-tRNA(Val) in a tRNA-dependent manner. This Staphylococcus aureus (strain bovine RF122 / ET3-1) protein is Valine--tRNA ligase.